Reading from the N-terminus, the 303-residue chain is Probable cell division protein WhiA (303 aa).

The segment at residues 272-303 (SIQQLADSLSTPLTKSGVNHRLRKINKIADEL) is a DNA-binding region (H-T-H motif).

It belongs to the WhiA family.

Functionally, involved in cell division and chromosome segregation. The protein is Probable cell division protein WhiA of Streptococcus pneumoniae serotype 4 (strain ATCC BAA-334 / TIGR4).